The primary structure comprises 3680 residues: Dystrophin (3680 aa).

The actin-binding stretch occupies residues 1–237 (MLWWEEVEDC…ILMYITSLFQ (237 aa)). Calponin-homology (CH) domains are found at residues 15–119 (DVQK…LHWQ) and 134–240 (TNSE…QVLP). Residues 63 to 72 (PKEKGSTRVH) are ANK2- and ANK-3 binding. Polar residues predominate over residues 310-323 (TSDPTRSPLPSQHL). Residues 310 to 332 (TSDPTRSPLPSQHLETPEDKSFG) form a disordered region. 24 Spectrin repeats span residues 340 to 448 (ANLD…NLHK), 449 to 557 (VLMD…LLQD), 560 to 668 (LKWQ…QISQ), 720 to 829 (EIRK…WLEY), 831 to 935 (NNII…ELQT), 944 to 1047 (RYQE…KLEE), 1050 to 1156 (AKLR…ALKG), 1159 to 1265 (DKTV…TLEE), 1268 to 1369 (ACWH…LLEQ), 1370 to 1465 (SIQS…LFQK), 1470 to 1570 (EQRL…QLEK), 1573 to 1678 (KLSR…LLLE), 1681 to 1780 (KHME…KASI), 1781 to 1876 (PLKE…KALE), 1879 to 1981 (HQWY…TVHE), 1994 to 2103 (EISY…RFDR), 2106 to 2210 (EKWR…RLEE), 2213 to 2320 (NILS…EIEA), 2321 to 2418 (HVKD…LRAK), 2470 to 2572 (FNRA…QLTE), 2575 to 2681 (KDST…ALEE), 2684 to 2797 (RLLQ…HLEA), 2803 to 2925 (KRLH…RKID), and 2930 to 3035 (RLQE…QLHE). The segment at 1418-1915 (DLTSHEISLE…PEPRDERKIK (498 aa)) is interaction with SYNM. In terms of domain architecture, WW spans 3050 to 3083 (TSVQGPWERAISPNKVPYYINHETQTTCWDHPKM). Residues 3053–3403 (QGPWERAISP…TVLEGDNMET (351 aa)) are interaction with SYNM. Residues 3303-3359 (KHQAKCNICKECPIIGFRYRSLKHFNYDICQSCFFSGRVAKGHKMHYPMVEYCTPTT) form a ZZ-type; degenerate zinc finger. Residues Cys3308, Cys3311, Cys3332, and Cys3335 each contribute to the Zn(2+) site. The interval 3461-3513 (DDEHLLIQHYWRSLNQESPLSQPRSPAQILISLESEERGELERILADLEGRNR) is binds to SNTB1. Residues Ser3478, Ser3485, and Ser3495 each carry the phosphoserine modification. Disordered regions lie at residues 3524–3549 (QQHE…QSPR) and 3595–3680 (PQAE…EDTM). 2 stretches are compositionally biased toward polar residues: residues 3602–3621 (NGTT…SSQP) and 3658–3668 (LNHSFPSSRGR). Phosphoserine is present on residues Ser3607, Ser3608, Ser3612, Ser3618, Ser3619, and Ser3661.

Interacts with SYNM. Interacts with the syntrophins SNTG1 and SNTG2. Interacts with KRT19. Component of the dystrophin-associated glycoprotein complex which is composed of three subcomplexes: a cytoplasmic complex comprised of DMD (or UTRN), DTNA and a number of syntrophins, such as SNTB1, SNTB2, SNTG1 and SNTG2, the transmembrane dystroglycan complex, and the sarcoglycan-sarcospan complex. Interacts with DAG1 (betaDAG1) with DMD; the interaction is inhibited by phosphorylation on the PPXY motif of DAG1. Interacts with SYNM; SNTA1 and SNTB1. Interacts with CMYA5. Directly interacts with ANK2 and ANK3; these interactions do not interfere with betaDAG1-binding and are necessary for proper localization in muscle cells. Identified in a dystroglycan complex that contains at least PRX, DRP2, UTRN, DMD and DAG1. Interacts with DTNB. Interacts with PGM5; the interaction is direct. Interacts with NOS1; localizes NOS1 to sarcolemma in muscle cells.

It localises to the cell membrane. It is found in the sarcolemma. The protein resides in the cytoplasm. The protein localises to the cytoskeleton. Its subcellular location is the postsynaptic cell membrane. Anchors the extracellular matrix to the cytoskeleton via F-actin. Ligand for dystroglycan. Component of the dystrophin-associated glycoprotein complex which accumulates at the neuromuscular junction (NMJ) and at a variety of synapses in the peripheral and central nervous systems and has a structural function in stabilizing the sarcolemma. Also implicated in signaling events and synaptic transmission. This chain is Dystrophin (DMD), found in Canis lupus familiaris (Dog).